The primary structure comprises 434 residues: Cytochrome c biogenesis protein CcsB (434 aa).

A run of 3 helical transmembrane segments spans residues 15–35, 73–93, and 163–183; these read LRVAIVLLLLIAACSGLGTAI, SNWFLLLLAWLGLALLLCSLR, and VGPLLVHTGLIVFMVGAVVGA.

This sequence belongs to the Ccs1/CcsB family. In terms of assembly, may interact with CcsA.

The protein resides in the cellular thylakoid membrane. Functionally, required during biogenesis of c-type cytochromes (cytochrome c6 and cytochrome f) at the step of heme attachment. In Synechococcus sp. (strain RCC307), this protein is Cytochrome c biogenesis protein CcsB.